Here is a 466-residue protein sequence, read N- to C-terminus: Soluble pyridine nucleotide transhydrogenase (466 aa).

Position 36 to 45 (36 to 45 (ERYHNIGGGC)) interacts with FAD.

This sequence belongs to the class-I pyridine nucleotide-disulfide oxidoreductase family. FAD is required as a cofactor.

It is found in the cytoplasm. The enzyme catalyses NAD(+) + NADPH = NADH + NADP(+). Conversion of NADPH, generated by peripheral catabolic pathways, to NADH, which can enter the respiratory chain for energy generation. In Erwinia tasmaniensis (strain DSM 17950 / CFBP 7177 / CIP 109463 / NCPPB 4357 / Et1/99), this protein is Soluble pyridine nucleotide transhydrogenase.